The sequence spans 557 residues: uncharacterized protein (557 aa).

An N-terminal signal peptide occupies residues M1–A30. A lipid anchor (N-palmitoyl cysteine) is attached at C31. The S-diacylglycerol cysteine moiety is linked to residue C31.

The protein to M.bovis Mb2616c and M.leprae ML0489.

Its subcellular location is the cell membrane. This is an uncharacterized protein from Mycobacterium tuberculosis (strain CDC 1551 / Oshkosh).